A 593-amino-acid chain; its full sequence is Probable tripeptidyl-peptidase SED3 (593 aa).

The signal sequence occupies residues Met-1 to Ala-18. Residues Leu-19–Asn-198 constitute a propeptide, removed in mature form. N-linked (GlcNAc...) asparagine glycosylation is found at Asn-198, Asn-204, Asn-261, and Asn-275. In terms of domain architecture, Peptidase S53 spans Thr-206 to Met-592. Residues Glu-282 and Asp-286 each act as charge relay system in the active site. N-linked (GlcNAc...) asparagine glycosylation occurs at Asn-295. Catalysis depends on Ser-496, which acts as the Charge relay system. Ca(2+) is bound by residues Asp-538 and Ile-539. N-linked (GlcNAc...) asparagine glycosylation is found at Asn-554 and Asn-566. Ca(2+)-binding residues include Gly-570 and Asp-572.

Ca(2+) is required as a cofactor.

It is found in the secreted. The protein resides in the extracellular space. The catalysed reaction is Release of an N-terminal tripeptide from a polypeptide.. Secreted tripeptidyl-peptidase which degrades proteins at acidic pHs and is involved in virulence. This is Probable tripeptidyl-peptidase SED3 (SED3) from Trichophyton verrucosum (strain HKI 0517).